Consider the following 141-residue polypeptide: Large ribosomal subunit protein uL11 (141 aa).

The protein belongs to the universal ribosomal protein uL11 family. Part of the ribosomal stalk of the 50S ribosomal subunit. Interacts with L10 and the large rRNA to form the base of the stalk. L10 forms an elongated spine to which L12 dimers bind in a sequential fashion forming a multimeric L10(L12)X complex. Post-translationally, one or more lysine residues are methylated.

Its function is as follows. Forms part of the ribosomal stalk which helps the ribosome interact with GTP-bound translation factors. The protein is Large ribosomal subunit protein uL11 of Parasynechococcus marenigrum (strain WH8102).